A 289-amino-acid chain; its full sequence is Mas-related G-protein coupled receptor member G (289 aa).

The Extracellular portion of the chain corresponds to 1–13 (MLSIFNIWGTFNR). The chain crosses the membrane as a helical span at residues 14 to 34 (VLFFLSLTVSLAGLAGNTLLL). Residues 35–49 (WHLGLRIKKGPFNTY) lie on the Cytoplasmic side of the membrane. Residues 50-70 (LLHLAAADFLFLSCQVGFSIA) traverse the membrane as a helical segment. At 71–80 (KIASGYEDTL) the chain is on the extracellular side. A helical transmembrane segment spans residues 81–101 (YFPVTFLWFAVGLWLLAAFIV). Topologically, residues 102 to 123 (DCCLSYMFPSFCGPNCRPRYTS) are cytoplasmic. A helical membrane pass occupies residues 124–144 (FVLCLVIWALTMLAVLLPANA). Topologically, residues 145 to 164 (CGLLYNRMSLLVCLKYHWVS) are extracellular. A helical membrane pass occupies residues 165-185 (VVWLGVLASTACGASMFLLVF). Residues 186-200 (GNCCSSQPPSKFCKL) are Cytoplasmic-facing. A helical transmembrane segment spans residues 201 to 221 (AQCSGILLFFCRLPLVFYWCL). Arg-222 is a topological domain (extracellular). Residues 223-243 (PVIKFLLPFFFPLATLLACID) traverse the membrane as a helical segment. Residues 244 to 289 (SSAKPLLYYLKGRQLRKEPLQVALNRALGEESQSSSGGISLPMSRV) are Cytoplasmic-facing.

Belongs to the G-protein coupled receptor 1 family. Mas subfamily.

The protein localises to the cell membrane. Its function is as follows. Orphan receptor. May regulate nociceptor function and/or development, including the sensation or modulation of pain. The polypeptide is Mas-related G-protein coupled receptor member G (Mrgprg) (Rattus norvegicus (Rat)).